The sequence spans 177 residues: Endoribonuclease YbeY (177 aa).

Residues H118, H122, and H128 each contribute to the Zn(2+) site.

Belongs to the endoribonuclease YbeY family. Zn(2+) serves as cofactor.

The protein resides in the cytoplasm. Its function is as follows. Single strand-specific metallo-endoribonuclease involved in late-stage 70S ribosome quality control and in maturation of the 3' terminus of the 16S rRNA. The sequence is that of Endoribonuclease YbeY from Mycolicibacterium paratuberculosis (strain ATCC BAA-968 / K-10) (Mycobacterium paratuberculosis).